A 347-amino-acid chain; its full sequence is NADH-ubiquinone oxidoreductase chain 2 (347 aa).

Transmembrane regions (helical) follow at residues Ile-5 to Phe-22, Trp-26 to Met-45, Phe-60 to Cys-80, Thr-96 to Pro-116, Ile-122 to Leu-142, Leu-153 to Thr-173, Ile-178 to Pro-198, Leu-200 to Met-220, Phe-237 to Leu-257, Asp-274 to Thr-294, and Leu-325 to Ala-345.

This sequence belongs to the complex I subunit 2 family. Core subunit of respiratory chain NADH dehydrogenase (Complex I) which is composed of 45 different subunits. Interacts with TMEM242.

It localises to the mitochondrion inner membrane. It carries out the reaction a ubiquinone + NADH + 5 H(+)(in) = a ubiquinol + NAD(+) + 4 H(+)(out). Functionally, core subunit of the mitochondrial membrane respiratory chain NADH dehydrogenase (Complex I) which catalyzes electron transfer from NADH through the respiratory chain, using ubiquinone as an electron acceptor. Essential for the catalytic activity and assembly of complex I. The protein is NADH-ubiquinone oxidoreductase chain 2 of Ailuropoda melanoleuca (Giant panda).